Consider the following 122-residue polypeptide: Double-headed protease inhibitor, submandibular gland (122 aa).

Kazal-like domains lie at 10-70 (GGRK…NCDI) and 71-121 (ECTQ…QCES). 6 disulfide bridges follow: Cys-16/Cys-50, Cys-28/Cys-47, Cys-36/Cys-68, Cys-72/Cys-101, Cys-79/Cys-98, and Cys-87/Cys-119.

It is found in the secreted. This inhibitor is composed of two homologous actively inhibiting halves: one which inhibits trypsin, the other which inhibits elastase. The sequence is that of Double-headed protease inhibitor, submandibular gland from Meles meles (Eurasian badger).